Reading from the N-terminus, the 1130-residue chain is 3-hydroxy-3-methylglutaryl-coenzyme A reductase 1 (1130 aa).

The Cytoplasmic segment spans residues 1–46 (MATSLITRKLRSAEATNDVEPGWLKRQVTGVLQSISSHACQHPIHT). Residues 47 to 67 (IVVIALLASTTYVGLLEGSLF) traverse the membrane as a helical segment. Topologically, residues 68 to 242 (DSVRNSRNIA…DLIKHAETID (175 aa)) are lumenal. A glycan (N-linked (GlcNAc...) asparagine) is linked at N148. Positions 242-415 (DIVIMTLGYL…FTFYTTILCI (174 aa)) constitute an SSD domain. Residues 243-263 (IVIMTLGYLSMHLSFVSLFFS) form a helical membrane-spanning segment. Residues 264–270 (MRRLGSN) lie on the Cytoplasmic side of the membrane. Residues 271 to 291 (FWLAATVLFSGVFAFLFGLLV) form a helical membrane-spanning segment. Topologically, residues 292–296 (TTKLG) are lumenal. The helical transmembrane segment at 297-317 (VPINVLLLSEGLPFLVVTIGF) threads the bilayer. At 318-366 (EKPIILTRAVLTAAADNRGRAGQASSSTTKSIQDSIQTAIKEQGFEIIR) the chain is on the cytoplasmic side. A helical membrane pass occupies residues 367–387 (DYCIEIAILIAGAASGVQGGL). Over 388–389 (RQ) the chain is Lumenal. Residues 390-410 (FCFLAAWILFFDCVLLFTFYT) form a helical membrane-spanning segment. Topologically, residues 411-476 (TILCIKLEIN…RKLRSSSVRR (66 aa)) are cytoplasmic. The helical transmembrane segment at 477-497 (FKILMVGGFVLVNVVNLSTIP) threads the bilayer. Residues 498 to 601 (FRDSSQGAGL…ESLLKSIEDP (104 aa)) lie on the Lumenal side of the membrane. The helical transmembrane segment at 602–622 (IISKWIIAALTLSIILNGYLF) threads the bilayer. Topologically, residues 623 to 1130 (NAARWSIKEP…ARGLTMSSSE (508 aa)) are cytoplasmic. The active-site Charge relay system is E792. 798-804 (STSRGAK) contributes to the CoA binding site. NADP(+) is bound by residues 859 to 861 (SRF) and 886 to 894 (DAMGMNMIS). Residue K926 is the Charge relay system of the active site. 955-957 (VLK) contacts CoA. D1002 serves as the catalytic Charge relay system. A CoA-binding site is contributed by 1097–1098 (AH). The active-site Proton donor is H1098. An NADP(+)-binding site is contributed by 1102-1103 (NR). Positions 1103-1122 (RSAATTRTSTPVSAAVSAAR) are enriched in low complexity. The disordered stretch occupies residues 1103–1130 (RSAATTRTSTPVSAAVSAARGLTMSSSE).

Belongs to the HMG-CoA reductase family.

It is found in the endoplasmic reticulum membrane. It catalyses the reaction (R)-mevalonate + 2 NADP(+) + CoA = (3S)-3-hydroxy-3-methylglutaryl-CoA + 2 NADPH + 2 H(+). It participates in metabolic intermediate biosynthesis; (R)-mevalonate biosynthesis; (R)-mevalonate from acetyl-CoA: step 3/3. Its function is as follows. HMG-CoA reductase; part of the first module of ergosterol biosynthesis pathway that includes the early steps of the pathway, conserved across all eukaryotes, and which results in the formation of mevalonate from acetyl-coenzyme A (acetyl-CoA). Hmg1 and hmg2 catalyze the reduction of hydroxymethylglutaryl-CoA (HMG-CoA) to mevalonate. The first module starts with the action of the cytosolic acetyl-CoA acetyltransferase erg10B that catalyzes the formation of acetoacetyl-CoA. The hydroxymethylglutaryl-CoA synthases erg13A and erg13B then condense acetyl-CoA with acetoacetyl-CoA to form HMG-CoA. The rate-limiting step of the early module is the reduction to mevalonate by the 3-hydroxy-3-methylglutaryl-coenzyme A (HMG-CoA) reductases hmg1 and hmg2. Mevalonate is also a precursor for the extracellular siderophore triacetylfusarinine C (TAFC). This chain is 3-hydroxy-3-methylglutaryl-coenzyme A reductase 1, found in Aspergillus fumigatus (strain ATCC MYA-4609 / CBS 101355 / FGSC A1100 / Af293) (Neosartorya fumigata).